Reading from the N-terminus, the 482-residue chain is Exodeoxyribonuclease I (482 aa).

Residues 13–194 (LFYDYETFGI…TSDVYATIEL (182 aa)) enclose the Exonuclease domain. Residues D16, E18, and D187 each coordinate Mg(2+). E18 serves as a coordination point for substrate. The ExoI SH3-like domain occupies 203-351 (PKLFDFFFKY…LVKNVLLKKN (149 aa)). One can recognise an ExoI C-terminal domain in the interval 355 to 471 (NSLNVDLQIY…DLLKYVFKKY (117 aa)).

Monomer. Interacts with ssb (via C-terminus); this interaction stimulates the exonuclease activity by recruiting the enzyme to its substrate. Mg(2+) serves as cofactor.

The catalysed reaction is Exonucleolytic cleavage in the 3'- to 5'-direction to yield nucleoside 5'-phosphates.. In terms of biological role, degrades single-stranded DNA (ssDNA) in a highly processive manner. Also functions as a DNA deoxyribophosphodiesterase that releases deoxyribose-phosphate moieties following the cleavage of DNA at an apurinic/apyrimidinic (AP) site by either an AP endonuclease or AP lyase. This Buchnera aphidicola subsp. Schizaphis graminum (strain Sg) protein is Exodeoxyribonuclease I (sbcB).